The sequence spans 649 residues: Acetyl-coenzyme A synthetase (649 aa).

Residues 191–194 (RGGR), T311, and N335 contribute to the CoA site. ATP-binding positions include 387–389 (GEP), 411–416 (DTWWQT), D500, and R515. S523 serves as a coordination point for CoA. Position 526 (R526) interacts with ATP. 3 residues coordinate Mg(2+): V537, H539, and I542. R584 provides a ligand contact to CoA. N6-acetyllysine is present on K609.

It belongs to the ATP-dependent AMP-binding enzyme family. Mg(2+) is required as a cofactor. In terms of processing, acetylated. Deacetylation by the SIR2-homolog deacetylase activates the enzyme.

It carries out the reaction acetate + ATP + CoA = acetyl-CoA + AMP + diphosphate. Its function is as follows. Catalyzes the conversion of acetate into acetyl-CoA (AcCoA), an essential intermediate at the junction of anabolic and catabolic pathways. AcsA undergoes a two-step reaction. In the first half reaction, AcsA combines acetate with ATP to form acetyl-adenylate (AcAMP) intermediate. In the second half reaction, it can then transfer the acetyl group from AcAMP to the sulfhydryl group of CoA, forming the product AcCoA. This is Acetyl-coenzyme A synthetase from Psychromonas ingrahamii (strain DSM 17664 / CCUG 51855 / 37).